Reading from the N-terminus, the 103-residue chain is Large ribosomal subunit protein bL21 (103 aa).

The protein belongs to the bacterial ribosomal protein bL21 family. As to quaternary structure, part of the 50S ribosomal subunit. Contacts protein L20.

Functionally, this protein binds to 23S rRNA in the presence of protein L20. This Thermobifida fusca (strain YX) protein is Large ribosomal subunit protein bL21.